We begin with the raw amino-acid sequence, 260 residues long: Lipid II isoglutaminyl synthase (glutamine-hydrolyzing) subunit GatD (260 aa).

One can recognise a GATase cobBQ-type domain in the interval 16-214 (QLNIAHLYGN…FHGPILSRNA (199 aa)). Cysteine 107 (nucleophile) is an active-site residue. Arginine 142 serves as a coordination point for substrate. Histidine 206 is a catalytic residue.

The protein belongs to the CobB/CobQ family. GatD subfamily. As to quaternary structure, forms a heterodimer with MurT.

It carries out the reaction beta-D-GlcNAc-(1-&gt;4)-Mur2Ac(oyl-L-Ala-gamma-D-Glu-L-Lys-D-Ala-D-Ala)-di-trans,octa-cis-undecaprenyl diphosphate + L-glutamine + ATP + H2O = beta-D-GlcNAc-(1-&gt;4)-Mur2Ac(oyl-L-Ala-D-isoglutaminyl-L-Lys-D-Ala-D-Ala)-di-trans,octa-cis-undecaprenyl diphosphate + L-glutamate + ADP + phosphate + H(+). The enzyme catalyses L-glutamine + H2O = L-glutamate + NH4(+). It participates in cell wall biogenesis; peptidoglycan biosynthesis. The lipid II isoglutaminyl synthase complex catalyzes the formation of alpha-D-isoglutamine in the cell wall lipid II stem peptide. The GatD subunit catalyzes the hydrolysis of glutamine to glutamate and ammonia. The resulting ammonia molecule is channeled to the active site of MurT. This is Lipid II isoglutaminyl synthase (glutamine-hydrolyzing) subunit GatD from Streptococcus pneumoniae (strain ATCC BAA-255 / R6).